Here is a 208-residue protein sequence, read N- to C-terminus: Protein GrpE (208 aa).

Residues 1 to 25 (MVDNKDFNEELKESIQEELDNETKS) show a composition bias toward basic and acidic residues. Positions 1-38 (MVDNKDFNEELKESIQEELDNETKSENPNIDEEVEEVS) are disordered. Over residues 29 to 38 (NIDEEVEEVS) the composition is skewed to acidic residues.

The protein belongs to the GrpE family. As to quaternary structure, homodimer.

It is found in the cytoplasm. Functionally, participates actively in the response to hyperosmotic and heat shock by preventing the aggregation of stress-denatured proteins, in association with DnaK and GrpE. It is the nucleotide exchange factor for DnaK and may function as a thermosensor. Unfolded proteins bind initially to DnaJ; upon interaction with the DnaJ-bound protein, DnaK hydrolyzes its bound ATP, resulting in the formation of a stable complex. GrpE releases ADP from DnaK; ATP binding to DnaK triggers the release of the substrate protein, thus completing the reaction cycle. Several rounds of ATP-dependent interactions between DnaJ, DnaK and GrpE are required for fully efficient folding. The sequence is that of Protein GrpE from Clostridium perfringens (strain SM101 / Type A).